We begin with the raw amino-acid sequence, 540 residues long: NADH-quinone oxidoreductase subunit N (540 aa).

Helical transmembrane passes span L24–L44, L54–T74, P88–A108, A158–F178, L184–L204, Y219–G239, A263–F283, P295–L315, P331–Q351, M357–N377, M385–V405, V428–F448, G462–V482, and M505–P525.

It belongs to the complex I subunit 2 family. In terms of assembly, NDH-1 is composed of 14 different subunits. Subunits NuoA, H, J, K, L, M, N constitute the membrane sector of the complex.

Its subcellular location is the cell membrane. The enzyme catalyses a quinone + NADH + 5 H(+)(in) = a quinol + NAD(+) + 4 H(+)(out). In terms of biological role, NDH-1 shuttles electrons from NADH, via FMN and iron-sulfur (Fe-S) centers, to quinones in the respiratory chain. The immediate electron acceptor for the enzyme in this species is believed to be a menaquinone. Couples the redox reaction to proton translocation (for every two electrons transferred, four hydrogen ions are translocated across the cytoplasmic membrane), and thus conserves the redox energy in a proton gradient. The protein is NADH-quinone oxidoreductase subunit N of Rhodococcus opacus (strain B4).